A 479-amino-acid chain; its full sequence is NADH oxidase (479 aa).

FAD contacts are provided by residues 8-12 (GVNHA), aspartate 33, cysteine 43, valine 80, 111-114 (ASGA), lysine 149, and tyrosine 177. Histidine 11 (proton acceptor) is an active-site residue. Cysteine 43 functions as the Redox-active in the catalytic mechanism. At cysteine 43 the chain carries Cysteine sulfinic acid (-SO2H). NAD(+) contacts are provided by residues 170 to 185 (VAIV…LAEA), aspartate 197, and glycine 264. FAD is bound by residues 295–305 (LNHENVYVIGG), leucine 322, alanine 323, and threonine 324. Alanine 353 serves as a coordination point for NAD(+). FAD is bound at residue phenylalanine 450.

This sequence belongs to the class-III pyridine nucleotide-disulfide oxidoreductase family. FAD is required as a cofactor.

The enzyme catalyses 2 NADH + O2 + 2 H(+) = 2 NAD(+) + 2 H2O. Catalyzes the four-electron reduction of molecular oxygen to water. The sequence is that of NADH oxidase (nox) from Mycoplasma pneumoniae (strain ATCC 29342 / M129 / Subtype 1) (Mycoplasmoides pneumoniae).